Reading from the N-terminus, the 266-residue chain is NADP-dependent mannitol dehydrogenase (266 aa).

Residues S53, N107, and K140 each contribute to the NADP(+) site. Residue S159 is the Proton donor of the active site. NADP(+)-binding residues include Y174, K178, I206, and T208. Y174 (proton acceptor) is an active-site residue. K178 (lowers pKa of active site Tyr) is an active-site residue.

It belongs to the short-chain dehydrogenases/reductases (SDR) family. Homotetramer.

It catalyses the reaction D-mannitol + NADP(+) = D-fructose + NADPH + H(+). Functionally, D-mannitol 2-dehydrogenase which is not necessary for D-mannitol catabolism. D-mannitol metabolism occurs via at least two different routes involving mannitol dehydrogenase (MDH) or mannitol 1-phosphate dehydrogenase, and the exact physiological role of mannitol dehydrogenases remains unclear. In Hypocrea jecorina (strain ATCC 56765 / BCRC 32924 / NRRL 11460 / Rut C-30) (Trichoderma reesei), this protein is NADP-dependent mannitol dehydrogenase.